We begin with the raw amino-acid sequence, 397 residues long: P2X purinoceptor 3 (397 aa).

Over 1-20 the chain is Cytoplasmic; sequence MNCISDFFTYETTKSVVVKS. Residues 21–43 form a helical membrane-spanning segment; that stretch reads WTIGIINRAVQLLIISYFVGWVF. Residues 44–322 are Extracellular-facing; sequence LHEKAYQVRD…AGKFNIIPTI (279 aa). Lys63 and Lys65 together coordinate ATP. 3 disulfides stabilise this stretch: Cys107–Cys153, Cys116–Cys137, and Cys122–Cys147. Mg(2+) is bound at residue Glu111. The N-linked (GlcNAc...) asparagine glycan is linked to Asn139. Asp158 is a binding site for Mg(2+). Asp158 serves as a coordination point for Ca(2+). The N-linked (GlcNAc...) asparagine glycan is linked to Asn170. ATP is bound at residue Thr172. Asn194 carries an N-linked (GlcNAc...) asparagine glycan. Intrachain disulfides connect Cys203–Cys213 and Cys247–Cys256. Positions 275, 279, and 281 each coordinate ATP. The N-linked (GlcNAc...) asparagine glycan is linked to Asn290. Lys299 lines the ATP pocket. A helical transmembrane segment spans residues 323-341; sequence ISSVAAFTSVGVGTVLCDI. The Cytoplasmic segment spans residues 342–397; that stretch reads ILLNFLKGADHYKARKFEEVTETTLKGTASTNPVFTSDQATVEKQSTDSGAYSIGH.

The protein belongs to the P2X receptor family. As to quaternary structure, homotrimer. Forms heterotrimer with P2RX2. Heterotrimeric P2RX2/3 has a ligand dose-response profile that is distinct from either homotrimeric P2RX2 or P2RX3.

It is found in the cell membrane. It carries out the reaction Ca(2+)(in) = Ca(2+)(out). The catalysed reaction is Na(+)(in) = Na(+)(out). Its activity is regulated as follows. Has high sensitivity to ATP. Fast activation by external ATP. Exhibits rapid desensitization. Sensitives to the ATP agonist:alpha/beta-methylene-ATP. Subject to allosteric inhibition by AF-219. Mg(2+) and Ca(2+) slow deactivation of P2RX3. In terms of biological role, extracellular ATP-activated non-selective cation channel. Plays particularly important role in sensory neurons where its activation is critical for gustatory, nociceptive responses, visceral reflexes and sensory hypersensitization. The sequence is that of P2X purinoceptor 3 (P2rx3) from Mus musculus (Mouse).